The following is a 214-amino-acid chain: Adenylate kinase (214 aa).

Position 10-15 (10-15 (GAGKGT)) interacts with ATP. An NMP region spans residues 30 to 59 (STGDMFREAVASKSELGKKVEEILKRGDLV). AMP is bound by residues Thr31, Arg36, 57–59 (DLV), 85–88 (GFPR), and Gln92. Positions 126-163 (NRRICSNCGKIYNLITLPPKVDGKCDVCGGTLYQREDD) are LID. Position 127 (Arg127) interacts with ATP. Residues Cys130 and Cys133 each coordinate Zn(2+). 136–137 (IY) contacts ATP. Cys150 and Cys153 together coordinate Zn(2+). Positions 160 and 171 each coordinate AMP. Leu199 lines the ATP pocket.

The protein belongs to the adenylate kinase family. As to quaternary structure, monomer.

It localises to the cytoplasm. The catalysed reaction is AMP + ATP = 2 ADP. It functions in the pathway purine metabolism; AMP biosynthesis via salvage pathway; AMP from ADP: step 1/1. Catalyzes the reversible transfer of the terminal phosphate group between ATP and AMP. Plays an important role in cellular energy homeostasis and in adenine nucleotide metabolism. This chain is Adenylate kinase, found in Thermosipho africanus (strain TCF52B).